Reading from the N-terminus, the 507-residue chain is Protein O-glucosyltransferase 3 (507 aa).

The first 20 residues, 1–20 (MRRLPRALLLQLRLALLVAA), serve as a signal peptide directing secretion. The Filamin repeat unit spans residues 24 to 134 (EVLVSAPRSL…VAQSPYILKG (111 aa)). Residues asparagine 61 and asparagine 306 are each glycosylated (N-linked (GlcNAc...) asparagine). The Prevents secretion from ER motif lies at 504–507 (REEL).

It belongs to the KDELC family.

It is found in the endoplasmic reticulum lumen. It catalyses the reaction L-seryl-[EGF-like domain protein] + UDP-alpha-D-glucose = 3-O-(beta-D-glucosyl)-L-seryl-[EGF-like domain protein] + UDP + H(+). The catalysed reaction is L-seryl-[EGF-like domain protein] + UDP-alpha-D-xylose = 3-O-(beta-D-xylosyl)-L-seryl-[EGF-like domain protein] + UDP + H(+). The protein operates within protein modification; protein glycosylation. Functionally, protein glucosyltransferase that catalyzes the transfer of glucose from UDP-glucose to a serine residue within the consensus sequence peptide C-X-N-T-X-G-S-F-X-C. Can also catalyze the transfer of xylose from UDP-xylose but less efficiently. Specifically targets extracellular EGF repeats of proteins such as NOTCH1, NOTCH3, FBN1, FBN2 and LTBP1. May regulate the transport of NOTCH1 and NOTCH3 to the plasma membrane and thereby the Notch signaling pathway. The polypeptide is Protein O-glucosyltransferase 3 (Homo sapiens (Human)).